A 525-amino-acid polypeptide reads, in one-letter code: UPF0288 protein MA_3997 (525 aa).

The protein belongs to the UPF0288 family.

This is UPF0288 protein MA_3997 from Methanosarcina acetivorans (strain ATCC 35395 / DSM 2834 / JCM 12185 / C2A).